The primary structure comprises 314 residues: MADQAMTDQDQGAVTLYSGTAITDAKKNHPFSVKVGLAQVLRGGAIVEVSSVNQAKLAESAGACSVIVSDPVRSRGGVRRMPDPVLIKEVKRAVSVPVMARARVGHFVEAQILESLAVDYIDESEIISVADDDHFINKHNFRSPFICGCRDTGEALRRIREGAAMIRIQGDLTATGNIAETVKNVRSLMGEVRVLNNMDDDEVFTFAKKISAPYDLVAQTKQMGRVPVVQFASGGITTPADAALMMQLGCDGVFVGSEVFDGPDPFKKLRSIVQAVQHYNDPHVLAEMSSGLENAMESLNVRGDRIQDFGQGSV.

Ala-2 bears the N-acetylalanine mark.

It belongs to the PdxS/SNZ family. Homodimer or heterodimer with PDX1.1 or PDX1.3. No interaction with PDX2. As to expression, expressed in callus tissues, flowers and roots. Weakly expressed in leaves and stems.

Its subcellular location is the cytoplasm. In terms of biological role, the protein has no function in the formation of pyridoxal 5'-phosphate. In Arabidopsis thaliana (Mouse-ear cress), this protein is Pyridoxal 5'-phosphate synthase-like subunit PDX1.2 (PDX12).